Consider the following 525-residue polypeptide: MSRQLLPVLLLLLLRASCPWGQEQGARSPSEEPPEEEIPKEDGILVLSRHTLGLALREHPALLVEFYAPWCGHCQALAPEYSKAAAVLAAESMVVTLAKVDGPAQRELAEEFGVTEYPTLKFFRNGNRTHPEEYTGPRDAEGIAEWLRRRVGPSAMRLEDEAAAQALIGGRDLVVIGFFQDLQDEDVATFLALAQDALDMTFGLTDRPRLFQQFGLTKDTVVLFKKFDEGRADFPVDEELGLDLGDLSRFLVTHSMRLVTEFNSQTSAKIFAARILNHLLLFVNQTLAAHRELLAGFGEAAPRFRGQVLFVVVDVAADNEHVLQYFGLKAEAAPTLRLVNLETTKKYAPVDGGPVTAASITAFCHAVLNGQVKPYLLSQEIPPDWDQRPVKTLVGKNFEQVAFDETKNVFVKFYAPWCTHCKEMAPAWEALAEKYQDHEDIIIAELDATANELDAFAVHGFPTLKYFPAGPGRKVIEYKSTRDLETFSKFLDNGGVLPTEEPPEEPAAPFPEPPANSTMGSKEEL.

The signal sequence occupies residues 1 to 21 (MSRQLLPVLLLLLLRASCPWG). Positions 27 to 152 (RSPSEEPPEE…IAEWLRRRVG (126 aa)) constitute a Thioredoxin 1 domain. Catalysis depends on nucleophile residues C71 and C74. A disulfide bridge links C71 with C74. N-linked (GlcNAc...) asparagine glycosylation is found at N127 and N284. The Thioredoxin 2 domain maps to 367–496 (VLNGQVKPYL…FSKFLDNGGV (130 aa)). Active-site nucleophile residues include C418 and C421. An intrachain disulfide couples C418 to C421. Residues 492–525 (DNGGVLPTEEPPEEPAAPFPEPPANSTMGSKEEL) are disordered. Over residues 505–514 (EPAAPFPEPP) the composition is skewed to pro residues. Residue N516 is glycosylated (N-linked (GlcNAc...) asparagine). Residues 516–525 (NSTMGSKEEL) show a composition bias toward polar residues. The Prevents secretion from ER motif lies at 522-525 (KEEL).

This sequence belongs to the protein disulfide isomerase family. Monomer; predominantly as monomer under reducing conditions. Homodimer; disulfide-linked. Part of a large chaperone multiprotein complex comprising DNAJB11, HSP90B1, HSPA5, HYOU, PDIA2, PDIA4, PDIA6, PPIB, SDF2L1, UGGT1 and very small amounts of ERP29, but not, or at very low levels, CALR nor CANX. In terms of processing, the disulfide-linked homodimer exhibits an enhanced chaperone activity. Glycosylated. As to expression, highly expressed in pancreas (at protein level).

The protein localises to the endoplasmic reticulum lumen. The catalysed reaction is Catalyzes the rearrangement of -S-S- bonds in proteins.. In terms of biological role, acts as an intracellular estrogen-binding protein. May be involved in modulating cellular levels and biological functions of estrogens in the pancreas. May act as a chaperone that inhibits aggregation of misfolded proteins. The protein is Protein disulfide-isomerase A2 (PDIA2) of Homo sapiens (Human).